The following is a 351-amino-acid chain: Biotin synthase (351 aa).

Residues 44-262 form the Radical SAM core domain; it reads NRVQVSTLLS…LAVARIMMPK (219 aa). [4Fe-4S] cluster-binding residues include C59, C63, and C66. Residues C103, C134, C194, and R266 each coordinate [2Fe-2S] cluster.

This sequence belongs to the radical SAM superfamily. Biotin synthase family. Homodimer. It depends on [4Fe-4S] cluster as a cofactor. [2Fe-2S] cluster is required as a cofactor.

It catalyses the reaction (4R,5S)-dethiobiotin + (sulfur carrier)-SH + 2 reduced [2Fe-2S]-[ferredoxin] + 2 S-adenosyl-L-methionine = (sulfur carrier)-H + biotin + 2 5'-deoxyadenosine + 2 L-methionine + 2 oxidized [2Fe-2S]-[ferredoxin]. It participates in cofactor biosynthesis; biotin biosynthesis; biotin from 7,8-diaminononanoate: step 2/2. Catalyzes the conversion of dethiobiotin (DTB) to biotin by the insertion of a sulfur atom into dethiobiotin via a radical-based mechanism. In Stutzerimonas stutzeri (strain A1501) (Pseudomonas stutzeri), this protein is Biotin synthase.